Reading from the N-terminus, the 200-residue chain is Recombination protein RecR (200 aa).

The segment at 57 to 72 (CRLCRTLTEEELCPQC) adopts a C4-type zinc-finger fold. Residues 80-175 (TLLCVVEGPT…VASRIAHGVP (96 aa)) enclose the Toprim domain.

The protein belongs to the RecR family.

Functionally, may play a role in DNA repair. It seems to be involved in an RecBC-independent recombinational process of DNA repair. It may act with RecF and RecO. The polypeptide is Recombination protein RecR (Pseudomonas syringae pv. tomato (strain ATCC BAA-871 / DC3000)).